Here is a 598-residue protein sequence, read N- to C-terminus: Elongation factor 4 (598 aa).

Residues 4–181 (KKIRNFAIIA…AIVNLIPPPQ (178 aa)) form the tr-type G domain. Residues 16 to 21 (DHGKST) and 128 to 131 (NKID) contribute to the GTP site.

The protein belongs to the TRAFAC class translation factor GTPase superfamily. Classic translation factor GTPase family. LepA subfamily.

The protein localises to the cell membrane. The catalysed reaction is GTP + H2O = GDP + phosphate + H(+). In terms of biological role, required for accurate and efficient protein synthesis under certain stress conditions. May act as a fidelity factor of the translation reaction, by catalyzing a one-codon backward translocation of tRNAs on improperly translocated ribosomes. Back-translocation proceeds from a post-translocation (POST) complex to a pre-translocation (PRE) complex, thus giving elongation factor G a second chance to translocate the tRNAs correctly. Binds to ribosomes in a GTP-dependent manner. The sequence is that of Elongation factor 4 from Mesomycoplasma hyopneumoniae (strain J / ATCC 25934 / NCTC 10110) (Mycoplasma hyopneumoniae).